We begin with the raw amino-acid sequence, 274 residues long: Large ribosomal subunit protein uL2 (274 aa).

A disordered region spans residues 223–274 (VVMNPVDHPHGGGEGRTSGGRHPVSPWGVPTKGFKTRKNKRTDKYIVRRRTK). Basic residues predominate over residues 256–274 (FKTRKNKRTDKYIVRRRTK).

This sequence belongs to the universal ribosomal protein uL2 family. As to quaternary structure, part of the 50S ribosomal subunit. Forms a bridge to the 30S subunit in the 70S ribosome.

One of the primary rRNA binding proteins. Required for association of the 30S and 50S subunits to form the 70S ribosome, for tRNA binding and peptide bond formation. It has been suggested to have peptidyltransferase activity; this is somewhat controversial. Makes several contacts with the 16S rRNA in the 70S ribosome. The polypeptide is Large ribosomal subunit protein uL2 (Vibrio atlanticus (strain LGP32) (Vibrio splendidus (strain Mel32))).